The primary structure comprises 78 residues: Small ribosomal subunit protein bS16c (78 aa).

This sequence belongs to the bacterial ribosomal protein bS16 family.

Its subcellular location is the plastid. The protein resides in the chloroplast. This chain is Small ribosomal subunit protein bS16c, found in Amborella trichopoda.